The chain runs to 574 residues: Zinc finger protein 394 (574 aa).

A Phosphoserine modification is found at serine 12. Lysine 40 participates in a covalent cross-link: Glycyl lysine isopeptide (Lys-Gly) (interchain with G-Cter in SUMO2). Positions 64–146 constitute an SCAN box domain; sequence RLHFRQLRYQ…AVVRALQRAL (83 aa). The 76-residue stretch at 155 to 230 folds into the KRAB domain; the sequence is VTFEDMAVSL…LQEAFQGKHP (76 aa). Positions 182–202 are disordered; it reads ESAQKDSGSTVPPSLESRVEN. Glycyl lysine isopeptide (Lys-Gly) (interchain with G-Cter in SUMO2) cross-links involve residues lysine 203, lysine 228, and lysine 254. The interval 231–284 is disordered; sequence LFSKCGSTHEDRVEKQSGNPLPLKLENSAEAEGLNSISDVNKNGSIEGEDSKNN. Polar residues predominate over residues 265–274; it reads NSISDVNKNG. Residue lysine 282 forms a Glycyl lysine isopeptide (Lys-Gly) (interchain with G-Cter in SUMO2) linkage. 7 C2H2-type zinc fingers span residues 358–380, 386–408, 414–436, 442–463, 469–491, 497–519, and 525–547; these read YKCG…QRIH, YGCQ…QRTH, YTCL…QSTH, FKCE…QRLH, YKCE…HRIH, YGCS…QRIH, and YKCL…QRIH. Lysine 443 participates in a covalent cross-link: Glycyl lysine isopeptide (Lys-Gly) (interchain with G-Cter in SUMO2).

This sequence belongs to the krueppel C2H2-type zinc-finger protein family.

It is found in the nucleus. May be involved in transcriptional regulation. The chain is Zinc finger protein 394 (ZNF394) from Pongo abelii (Sumatran orangutan).